The sequence spans 122 residues: Non-specific lipid-transfer protein (122 aa).

Residues 1–19 (MGVSRACFVVMVVVYMVVA) form the signal peptide. Residues 20–29 (ATPNVKLAEA) constitute a propeptide that is removed on maturation. Intrachain disulfides connect Cys-32/Cys-81, Cys-42/Cys-58, Cys-59/Cys-104, and Cys-79/Cys-118.

As to quaternary structure, monomer.

Its function is as follows. Plant non-specific lipid-transfer proteins transfer phospholipids as well as galactolipids across membranes. May play a role in wax or cutin deposition in the cell walls of expanding epidermal cells and certain secretory tissues. Binds saturated fatty acids, unsaturated fatty acids, lysolipids and, with highest efficiency, jasmonic acid. Has weak antimicrobial activity against fungi. Inhibits spore germination and hyphae elongation in A.niger VKM F-2259 and N.crassa VKM F-184. Has no antibacterial activity against A.tumefaciens A281, C.michiganensis VKM Ac-144 and P.syringae VKM B-1546. This is Non-specific lipid-transfer protein from Anethum graveolens (Dill).